The chain runs to 466 residues: Cytochrome c-552 (466 aa).

Residues 1 to 27 (MVRNLTKKSFALSALVAASLMASGVMA) form the signal peptide. Position 87 (H87) interacts with heme c. Residues C115, C118, and K119 each coordinate heme. Heme c contacts are provided by C153, C156, H157, C195, C198, and H199. Residues E201, Y202, K250, and Q252 each contribute to the Ca(2+) site. Y202 serves as a coordination point for substrate. A substrate-binding site is contributed by H253. Residues H264, C271, C274, H275, H290, C303, C306, H307, and H382 each contribute to the heme c site.

The protein belongs to the cytochrome c-552 family. It depends on Ca(2+) as a cofactor. Heme c is required as a cofactor.

Its subcellular location is the periplasm. The catalysed reaction is 6 Fe(III)-[cytochrome c] + NH4(+) + 2 H2O = 6 Fe(II)-[cytochrome c] + nitrite + 8 H(+). Its pathway is nitrogen metabolism; nitrate reduction (assimilation). Functionally, catalyzes the reduction of nitrite to ammonia, consuming six electrons in the process. The chain is Cytochrome c-552 from Shewanella sediminis (strain HAW-EB3).